The sequence spans 119 residues: MKYPLLALIKLYQWTISPLLGPVCRYYPSCSHYGYTSIDRHGAIKGTALTAWRILRCNPWSPGGVDHVPPRKRPRWHELLRNALRGEKGGESAADVPSGGSVSEPPGPAAETSPNAQGA.

The tract at residues 82 to 119 (NALRGEKGGESAADVPSGGSVSEPPGPAAETSPNAQGA) is disordered.

It belongs to the UPF0161 family.

It is found in the cell membrane. Its function is as follows. Could be involved in insertion of integral membrane proteins into the membrane. In Streptomyces griseus subsp. griseus (strain JCM 4626 / CBS 651.72 / NBRC 13350 / KCC S-0626 / ISP 5235), this protein is Putative membrane protein insertion efficiency factor.